Reading from the N-terminus, the 164-residue chain is Axial regulator YABBY 5 (164 aa).

The C4-type zinc-finger motif lies at 16 to 43; that stretch reads CNFCNIILAVNVPCSSLFDIVTVRCGHC.

It belongs to the YABBY family. In terms of assembly, binds to LUG and LUH; these complexes promote adaxial cell identity in leaves as well as embryonic shoot apical meristem (SAM) initiation and postembryonic SAM maintenance. Interacts with SPL/NZZ and SPEAR2.

It is found in the nucleus. Promotes adaxial cell identity. Regulates the initiation of embryonic shoot apical meristem (SAM) development. This Arabidopsis thaliana (Mouse-ear cress) protein is Axial regulator YABBY 5 (YAB5).